A 365-amino-acid chain; its full sequence is Prostaglandin E2 receptor EP3 subtype (365 aa).

The Extracellular portion of the chain corresponds to 1–30 (MAGVWAPEHSVEAHSNQSSAADGCGSVSVA). The N-linked (GlcNAc...) asparagine glycan is linked to Asn-16. The helical transmembrane segment at 31 to 55 (FPITMMVTGFVGNALAMLLVVRSYR) threads the bilayer. Residues 56 to 68 (RRESKRKKSFLLC) lie on the Cytoplasmic side of the membrane. The chain crosses the membrane as a helical span at residues 69-89 (IGWLALTDLVGQLLTSPVVIL). Residues 90–108 (VYLSQRRWEQLDPSGRLCT) lie on the Extracellular side of the membrane. A disulfide bridge links Cys-107 with Cys-184. A helical transmembrane segment spans residues 109–130 (FFGLTMTVFGLSSLLVASAMAV). Residues 131-151 (ERALAIRAPHWYASHMKTRAT) lie on the Cytoplasmic side of the membrane. A helical transmembrane segment spans residues 152–173 (PVLLGVWLSVLAFALLPVLGVG). Topologically, residues 174-203 (RYSVQWPGTWCFISTGPAGNETDSAREPGS) are extracellular. N-linked (GlcNAc...) asparagine glycosylation occurs at Asn-193. Residues 204-229 (VAFASAFACLGLLALVVTFACNLATI) form a helical membrane-spanning segment. Residues 230-259 (KALVSRCRAKAAASQSSAQWGRITTETAIQ) are Cytoplasmic-facing. A helical transmembrane segment spans residues 260–283 (LMGIMCVLSVCWSPLLIMMLKMIF). The Extracellular portion of the chain corresponds to 284–303 (NQMSVEQCKTQMGKEKECNS). Residues 304-325 (FLIAVRLASLNQILDPWVYLLL) form a helical membrane-spanning segment. Residues 326-365 (RKILLRKFCQIRDHTNYASSSTSLPCPGSSVLMWSDQLER) lie on the Cytoplasmic side of the membrane.

This sequence belongs to the G-protein coupled receptor 1 family. Interacts (via C-terminus) with MKLN1. As to quaternary structure, does not interact with MKLN1. Principally expressed in the tubules of the renal medulla. Specific expression is seen in medullary and cortical thick ascending limbs; lower levels are detected in cortical and inner medullary collecting ducts. Not detected significantly in the glomeruli. In the brain, expressed in all types of glial cells.

The protein resides in the cell membrane. Receptor for prostaglandin E2 (PGE2). Required for normal development of fever in response to pyrinogens, including IL1B, prostaglandin E2 and bacterial lipopolysaccharide (LPS). Required for normal potentiation of platelet aggregation by prostaglandin E2, and thus plays a role in the regulation of blood coagulation. Required for increased HCO3(-) secretion in the duodenum in response to mucosal acidification, and thereby contributes to the protection of the mucosa against acid-induced ulceration. Not required for normal kidney function, normal urine volume and osmolality. In terms of biological role, receptor for prostaglandin E2 (PGE2); ligand binding activates a signaling cascade via G(i) proteins that leads to the inhibition of adenylate cyclase. Functionally, receptor for prostaglandin E2 (PGE2); ligand binding can activate several distinct signaling cascades, resulting in activation or inhibition of adenylate cyclase. The chain is Prostaglandin E2 receptor EP3 subtype (Ptger3) from Rattus norvegicus (Rat).